Reading from the N-terminus, the 411-residue chain is Serine--tRNA ligase (411 aa).

Residue 226-228 (TSE) coordinates L-serine. Residue 257-259 (RKE) coordinates ATP. Glu-280 is an L-serine binding site. An ATP-binding site is contributed by 344–347 (EISS). Ser-379 provides a ligand contact to L-serine.

The protein belongs to the class-II aminoacyl-tRNA synthetase family. Type-1 seryl-tRNA synthetase subfamily. In terms of assembly, homodimer. The tRNA molecule binds across the dimer.

It localises to the cytoplasm. The enzyme catalyses tRNA(Ser) + L-serine + ATP = L-seryl-tRNA(Ser) + AMP + diphosphate + H(+). It catalyses the reaction tRNA(Sec) + L-serine + ATP = L-seryl-tRNA(Sec) + AMP + diphosphate + H(+). The protein operates within aminoacyl-tRNA biosynthesis; selenocysteinyl-tRNA(Sec) biosynthesis; L-seryl-tRNA(Sec) from L-serine and tRNA(Sec): step 1/1. Its function is as follows. Catalyzes the attachment of serine to tRNA(Ser). Is also able to aminoacylate tRNA(Sec) with serine, to form the misacylated tRNA L-seryl-tRNA(Sec), which will be further converted into selenocysteinyl-tRNA(Sec). The polypeptide is Serine--tRNA ligase (Campylobacter jejuni subsp. doylei (strain ATCC BAA-1458 / RM4099 / 269.97)).